We begin with the raw amino-acid sequence, 48 residues long: ATP synthase protein 8 (48 aa).

The helical transmembrane segment at 12–32 (LLTGGILAISLLLYFVATYLL) threads the bilayer.

This sequence belongs to the ATPase protein 8 family. As to quaternary structure, F-type ATPases have 2 components, CF(1) - the catalytic core - and CF(0) - the membrane proton channel.

The protein resides in the mitochondrion membrane. In terms of biological role, mitochondrial membrane ATP synthase (F(1)F(0) ATP synthase or Complex V) produces ATP from ADP in the presence of a proton gradient across the membrane which is generated by electron transport complexes of the respiratory chain. F-type ATPases consist of two structural domains, F(1) - containing the extramembraneous catalytic core and F(0) - containing the membrane proton channel, linked together by a central stalk and a peripheral stalk. During catalysis, ATP synthesis in the catalytic domain of F(1) is coupled via a rotary mechanism of the central stalk subunits to proton translocation. Part of the complex F(0) domain. Minor subunit located with subunit a in the membrane. The sequence is that of ATP synthase protein 8 (ATP8) from Candida parapsilosis (Yeast).